Reading from the N-terminus, the 445-residue chain is Methylthioribose-1-phosphate isomerase (445 aa).

Residue D286 is the Proton donor of the active site.

Belongs to the eIF-2B alpha/beta/delta subunits family. MtnA subfamily.

It localises to the cytoplasm. It is found in the nucleus. It carries out the reaction 5-(methylsulfanyl)-alpha-D-ribose 1-phosphate = 5-(methylsulfanyl)-D-ribulose 1-phosphate. It functions in the pathway amino-acid biosynthesis; L-methionine biosynthesis via salvage pathway; L-methionine from S-methyl-5-thio-alpha-D-ribose 1-phosphate: step 1/6. In terms of biological role, catalyzes the interconversion of methylthioribose-1-phosphate (MTR-1-P) into methylthioribulose-1-phosphate (MTRu-1-P). This is Methylthioribose-1-phosphate isomerase (mri1) from Sclerotinia sclerotiorum (strain ATCC 18683 / 1980 / Ss-1) (White mold).